Here is a 219-residue protein sequence, read N- to C-terminus: Lipid A acyltransferase PagP (219 aa).

An N-terminal signal peptide occupies residues 1–28 (MRLILISHSRLFALSALFLIPTFDSLSA). A disordered region spans residues 39-63 (IDRTTQSDSTTQRDSKTRRDPAPSF). Residues 49–59 (TQRDSKTRRDP) show a composition bias toward basic and acidic residues. Residues His91, Asp134, and Ser135 contribute to the active site.

The protein belongs to the lipid A palmitoyltransferase family. As to quaternary structure, homodimer.

It localises to the cell outer membrane. The catalysed reaction is a lipid A + a 1,2-diacyl-sn-glycero-3-phosphocholine = a hepta-acyl lipid A + a 2-acyl-sn-glycero-3-phosphocholine. It carries out the reaction a lipid IVA + a 1,2-diacyl-sn-glycero-3-phosphocholine = a lipid IVB + a 2-acyl-sn-glycero-3-phosphocholine. It catalyses the reaction a lipid IIA + a 1,2-diacyl-sn-glycero-3-phosphocholine = a lipid IIB + a 2-acyl-sn-glycero-3-phosphocholine. Transfers a fatty acid residue from the sn-1 position of a phospholipid to the N-linked hydroxyfatty acid chain on the proximal unit of lipid A or its precursors. This Dickeya zeae (strain Ech586) (Dickeya dadantii (strain Ech586)) protein is Lipid A acyltransferase PagP.